We begin with the raw amino-acid sequence, 347 residues long: NADH-quinone oxidoreductase subunit H (347 aa).

Helical transmembrane passes span 22-42 (GVVS…TAYL), 59-79 (PSLA…KLVF), 93-113 (FIIA…VIPI), 124-144 (IGGI…IIIA), 171-191 (MALS…IQIV), 198-218 (PIWL…SILA), 240-260 (VEYS…NMIL), 285-305 (IPGY…FLWI), and 321-341 (GLKV…AILV).

The protein belongs to the complex I subunit 1 family. As to quaternary structure, NDH-1 is composed of 14 different subunits. Subunits NuoA, H, J, K, L, M, N constitute the membrane sector of the complex.

The protein localises to the cell inner membrane. The catalysed reaction is a quinone + NADH + 5 H(+)(in) = a quinol + NAD(+) + 4 H(+)(out). Its function is as follows. NDH-1 shuttles electrons from NADH, via FMN and iron-sulfur (Fe-S) centers, to quinones in the respiratory chain. The immediate electron acceptor for the enzyme in this species is believed to be ubiquinone. Couples the redox reaction to proton translocation (for every two electrons transferred, four hydrogen ions are translocated across the cytoplasmic membrane), and thus conserves the redox energy in a proton gradient. This subunit may bind ubiquinone. The protein is NADH-quinone oxidoreductase subunit H of Orientia tsutsugamushi (strain Ikeda) (Rickettsia tsutsugamushi).